A 330-amino-acid chain; its full sequence is MSAPPTNQPPPLPPRSFDNQMSNPMINTGFGYGGGYGMNTFPGSGMYGGGGMYGGGMGYGGFGGGFNHMGYGQGPDSNFARLAEEQSRGAFQSIESVVNAVSSVANMLNSTHNAVYSSFRAVIGVVEQFGRLKTQLSSVVVSLAVFRWVYRFWRWLLVMLKLKPASYASAAEMAWGTSQPYATDVLGATRTPASVNWPAALFWVVAIGGPWLIYRCVSQMVQAAEEKRKWATGAAPHYTAQALFDFQASNEQELSFMNGETLRVAPKEEQPRVRGWLLASVADGSRIGLVPINYVRIVGKQSQSPPLTQQSNLDTFVNAFPARDLNSNIQ.

The span at 1–14 shows a compositional bias: pro residues; that stretch reads MSAPPTNQPPPLPP. The disordered stretch occupies residues 1–20; that stretch reads MSAPPTNQPPPLPPRSFDNQ. A helical transmembrane segment spans residues 193 to 213; it reads ASVNWPAALFWVVAIGGPWLI. The SH3 domain occupies 235-300; it reads APHYTAQALF…PINYVRIVGK (66 aa).

It belongs to the peroxin-13 family. In terms of assembly, interacts with PEX14/prx-14; forming the PEX13-PEX14 docking complex.

The protein resides in the peroxisome membrane. Component of the PEX13-PEX14 docking complex, a translocon channel that specifically mediates the import of peroxisomal cargo proteins bound to PEX5/prx-5 receptor. The PEX13-PEX14 docking complex forms a large import pore which can be opened to a diameter of about 9 nm. Mechanistically, PEX5/prx-5 receptor along with cargo proteins associates with the PEX14/prx-14 subunit of the PEX13-PEX14 docking complex in the cytosol, leading to the insertion of the receptor into the organelle membrane with the concomitant translocation of the cargo into the peroxisome matrix. The polypeptide is Peroxisomal membrane protein PEX13 (prx-13) (Caenorhabditis elegans).